The chain runs to 240 residues: Methylthioribulose-1-phosphate dehydratase (240 aa).

Residue Cys99 coordinates substrate. Zn(2+) is bound by residues His116 and His118. Glu145 functions as the Proton donor/acceptor in the catalytic mechanism. His201 serves as a coordination point for Zn(2+).

It belongs to the aldolase class II family. MtnB subfamily. The cofactor is Zn(2+).

Its subcellular location is the cytoplasm. The catalysed reaction is 5-(methylsulfanyl)-D-ribulose 1-phosphate = 5-methylsulfanyl-2,3-dioxopentyl phosphate + H2O. It participates in amino-acid biosynthesis; L-methionine biosynthesis via salvage pathway; L-methionine from S-methyl-5-thio-alpha-D-ribose 1-phosphate: step 2/6. Catalyzes the dehydration of methylthioribulose-1-phosphate (MTRu-1-P) into 2,3-diketo-5-methylthiopentyl-1-phosphate (DK-MTP-1-P). This Ajellomyces capsulatus (strain H143) (Darling's disease fungus) protein is Methylthioribulose-1-phosphate dehydratase.